A 1588-amino-acid polypeptide reads, in one-letter code: Pentafunctional AROM polypeptide (1588 aa).

The interval M1–D392 is 3-dehydroquinate synthase. Residues D43–N45, E78–K81, G109–V111, and D114 each bind NAD(+). R125 is a 7-phospho-2-dehydro-3-deoxy-D-arabino-heptonate binding site. T134–S135 lines the NAD(+) pocket. 7-phospho-2-dehydro-3-deoxy-D-arabino-heptonate-binding residues include D141 and K147. Residue K156 participates in NAD(+) binding. A 7-phospho-2-dehydro-3-deoxy-D-arabino-heptonate-binding site is contributed by N157. NAD(+) is bound by residues W174–T177 and N185. E189 contributes to the Zn(2+) binding site. 7-phospho-2-dehydro-3-deoxy-D-arabino-heptonate contacts are provided by residues E189–K192 and K258. E268 serves as the catalytic Proton acceptor; for 3-dehydroquinate synthase activity. 7-phospho-2-dehydro-3-deoxy-D-arabino-heptonate-binding positions include R272–N276 and H279. H279 serves as a coordination point for Zn(2+). The active-site Proton acceptor; for 3-dehydroquinate synthase activity is H283. Positions 295 and 364 each coordinate 7-phospho-2-dehydro-3-deoxy-D-arabino-heptonate. Zn(2+) is bound at residue H295. The tract at residues V405–A871 is EPSP synthase. C853 acts as the For EPSP synthase activity in catalysis. The tract at residues S890 to C1080 is shikimate kinase. G895–T902 contributes to the ATP binding site. The interval L1081–Q1293 is 3-dehydroquinase. H1198 functions as the Proton acceptor; for 3-dehydroquinate dehydratase activity in the catalytic mechanism. The Schiff-base intermediate with substrate; for 3-dehydroquinate dehydratase activity role is filled by K1227. The interval P1306–E1588 is shikimate dehydrogenase.

This sequence in the N-terminal section; belongs to the sugar phosphate cyclases superfamily. Dehydroquinate synthase family. The protein in the 2nd section; belongs to the EPSP synthase family. It in the 3rd section; belongs to the shikimate kinase family. In the 4th section; belongs to the type-I 3-dehydroquinase family. This sequence in the C-terminal section; belongs to the shikimate dehydrogenase family. As to quaternary structure, homodimer. It depends on Zn(2+) as a cofactor.

It localises to the cytoplasm. The enzyme catalyses 7-phospho-2-dehydro-3-deoxy-D-arabino-heptonate = 3-dehydroquinate + phosphate. It carries out the reaction 3-dehydroquinate = 3-dehydroshikimate + H2O. It catalyses the reaction shikimate + NADP(+) = 3-dehydroshikimate + NADPH + H(+). The catalysed reaction is shikimate + ATP = 3-phosphoshikimate + ADP + H(+). The enzyme catalyses 3-phosphoshikimate + phosphoenolpyruvate = 5-O-(1-carboxyvinyl)-3-phosphoshikimate + phosphate. The protein operates within metabolic intermediate biosynthesis; chorismate biosynthesis; chorismate from D-erythrose 4-phosphate and phosphoenolpyruvate: step 2/7. Its pathway is metabolic intermediate biosynthesis; chorismate biosynthesis; chorismate from D-erythrose 4-phosphate and phosphoenolpyruvate: step 3/7. It participates in metabolic intermediate biosynthesis; chorismate biosynthesis; chorismate from D-erythrose 4-phosphate and phosphoenolpyruvate: step 4/7. It functions in the pathway metabolic intermediate biosynthesis; chorismate biosynthesis; chorismate from D-erythrose 4-phosphate and phosphoenolpyruvate: step 5/7. The protein operates within metabolic intermediate biosynthesis; chorismate biosynthesis; chorismate from D-erythrose 4-phosphate and phosphoenolpyruvate: step 6/7. In terms of biological role, the AROM polypeptide catalyzes 5 consecutive enzymatic reactions in prechorismate polyaromatic amino acid biosynthesis. In Saccharomyces cerevisiae (strain YJM789) (Baker's yeast), this protein is Pentafunctional AROM polypeptide.